Consider the following 453-residue polypeptide: MSFTLAIVGRPNVGKSTLFNRLVGKRLALVDDRPGVTRDRREGDARLGDLAFRIVDTAGLEEADADSLEGRMRAQTETAIGDADALLFLIDARVGLTPTDRAFASLARRSGKPTILVANKSEGRGGEAGAMEAYELGLGAPVPLSAEHGEGLSDLYDAICEALPAQTAPQEEDEETEEAEANPNRPIKVAVIGRPNAGKSTLINRLLGEDRLLTGPEAGITRDSISVEVTWNGRALEVFDTAGLRKRARIEDKLEKLSAADALRAMKFAEVVVVLMDATKPFEEQDLRIADLVVREGRALVLGYNKSDLVGPAAFSRLREEADHWLPQVKGVPIVPLSGLTGRGLDKLVEAIAATYAVWNTRIPTNPLNRYLQEATDSHPPPAVSGRRVKIRYMTQPKARPPSFVLFCSRPEALPESYLRYITNGLREAFSLPGVPIRLTLREKGNPYADKDK.

EngA-type G domains follow at residues 3–167 and 187–360; these read FTLA…PAQT and IKVA…AVWN. Residues 9-16, 56-60, 119-122, 193-200, 240-244, and 305-308 contribute to the GTP site; these read GRPNVGKS, DTAGL, NKSE, GRPNAGKS, and NKSD. The region spanning 361–445 is the KH-like domain; it reads TRIPTNPLNR…PIRLTLREKG (85 aa).

It belongs to the TRAFAC class TrmE-Era-EngA-EngB-Septin-like GTPase superfamily. EngA (Der) GTPase family. Associates with the 50S ribosomal subunit.

Functionally, GTPase that plays an essential role in the late steps of ribosome biogenesis. This chain is GTPase Der, found in Azorhizobium caulinodans (strain ATCC 43989 / DSM 5975 / JCM 20966 / LMG 6465 / NBRC 14845 / NCIMB 13405 / ORS 571).